The sequence spans 193 residues: Small ribosomal subunit protein eS1 (193 aa).

It belongs to the eukaryotic ribosomal protein eS1 family.

This is Small ribosomal subunit protein eS1 from Sulfurisphaera tokodaii (strain DSM 16993 / JCM 10545 / NBRC 100140 / 7) (Sulfolobus tokodaii).